Reading from the N-terminus, the 264-residue chain is 3-methyl-2-oxobutanoate hydroxymethyltransferase (264 aa).

Mg(2+) is bound by residues aspartate 45 and aspartate 84. Residues 45–46 (DS), aspartate 84, and lysine 112 contribute to the 3-methyl-2-oxobutanoate site. Glutamate 114 contacts Mg(2+). Glutamate 181 acts as the Proton acceptor in catalysis.

Belongs to the PanB family. In terms of assembly, homodecamer; pentamer of dimers. It depends on Mg(2+) as a cofactor.

The protein localises to the cytoplasm. It catalyses the reaction 3-methyl-2-oxobutanoate + (6R)-5,10-methylene-5,6,7,8-tetrahydrofolate + H2O = 2-dehydropantoate + (6S)-5,6,7,8-tetrahydrofolate. The protein operates within cofactor biosynthesis; (R)-pantothenate biosynthesis; (R)-pantoate from 3-methyl-2-oxobutanoate: step 1/2. In terms of biological role, catalyzes the reversible reaction in which hydroxymethyl group from 5,10-methylenetetrahydrofolate is transferred onto alpha-ketoisovalerate to form ketopantoate. This is 3-methyl-2-oxobutanoate hydroxymethyltransferase from Shigella flexneri serotype 5b (strain 8401).